The primary structure comprises 417 residues: Calreticulin (417 aa).

An N-terminal signal peptide occupies residues 1–17 (MLLPVPLLLGLLGLAAA). Residues 18–197 (DPTVYFKEQF…NSQVESGSLE (180 aa)) are N-domain. Residue glutamine 26 coordinates Ca(2+). Lysine 48 carries the post-translational modification N6-acetyllysine. The Ca(2+) site is built by lysine 62 and lysine 64. Residue lysine 64 is modified to N6-(2-hydroxyisobutyryl)lysine. An alpha-D-glucoside-binding residues include tyrosine 109, lysine 111, tyrosine 128, and aspartate 135. A disulfide bridge links cysteine 137 with cysteine 163. Position 159 is an N6-acetyllysine (lysine 159). Asparagine 179 carries an N-linked (GlcNAc...) asparagine glycan. One copy of the 1-1 repeat lies at 191 to 202 (VESGSLEDDWDF). Residues 191 to 255 (VESGSLEDDW…DAKKPEDWDE (65 aa)) are 4 X approximate repeats. Residues 193 to 270 (SGSLEDDWDF…WEPPVIQNPE (78 aa)) are disordered. Positions 198 to 308 (DDWDFLPPKK…YSPDSNIYAY (111 aa)) are P-domain. The span at 207 to 251 (KIKDPDAAKPEDWDDRAKIDDPTDSKPEDWDKPEHIPDPDAKKPE) shows a compositional bias: basic and acidic residues. An N6-acetyllysine modification is found at lysine 209. 6 tandem repeats follow at residues 210–221 (DPDAAKPEDWDD), 227–238 (DPTDSKPEDWDK), 244–255 (DPDAKKPEDWDE), 259–269 (GEWEPPVIQNP), 273–283 (GEWKPRQIDNP), and 287–297 (GIWIHPEIDNP). An interaction with PPIB region spans residues 237 to 270 (DKPEHIPDPDAKKPEDWDEEMDGEWEPPVIQNPE). Over residues 252–261 (DWDEEMDGEW) the composition is skewed to acidic residues. The tract at residues 259 to 297 (GEWEPPVIQNPEYKGEWKPRQIDNPEYKGIWIHPEIDNP) is 3 X approximate repeats. The tract at residues 309 to 417 (ENFAVLGLDL…AAAGQAKDEL (109 aa)) is C-domain. Aspartate 317 contributes to the an alpha-D-glucoside binding site. A Ca(2+)-binding site is contributed by aspartate 328. The segment at 350-417 (TKAAEKQMKD…AAAGQAKDEL (68 aa)) is disordered. Positions 352–378 (AAEKQMKDKQDEEQRLHEEEEEKKGKE) are enriched in basic and acidic residues. The span at 379–408 (EEEADKDDDEDKDEDEEDEDEKEEEEEEDA) shows a compositional bias: acidic residues. Positions 414 to 417 (KDEL) match the Prevents secretion from ER motif.

It belongs to the calreticulin family. In terms of assembly, monomer. Component of an EIF2 complex at least composed of CELF1/CUGBP1, CALR, CALR3, EIF2S1, EIF2S2, HSP90B1 and HSPA5. Interacts with PDIA3/ERp57 and SPACA9. Interacts with TRIM21. Interacts with NR3C1. Interacts with PPIB. Interacts (via P-domain) with PDIA5. Interacts with GABARAP. Interacts with CLCC1.

Its subcellular location is the endoplasmic reticulum lumen. The protein resides in the cytoplasm. It is found in the cytosol. The protein localises to the secreted. It localises to the extracellular space. Its subcellular location is the extracellular matrix. The protein resides in the cell surface. It is found in the sarcoplasmic reticulum lumen. The protein localises to the cytoplasmic vesicle. It localises to the secretory vesicle. Its subcellular location is the cortical granule. The protein resides in the cytolytic granule. Its function is as follows. Calcium-binding chaperone that promotes folding, oligomeric assembly and quality control in the endoplasmic reticulum (ER) via the calreticulin/calnexin cycle. This lectin interacts transiently with almost all of the monoglucosylated glycoproteins that are synthesized in the ER. Interacts with the DNA-binding domain of NR3C1 and mediates its nuclear export. Involved in maternal gene expression regulation. May participate in oocyte maturation via the regulation of calcium homeostasis. Present in the cortical granules of non-activated oocytes, is exocytosed during the cortical reaction in response to oocyte activation and might participate in the block to polyspermy. The protein is Calreticulin (CALR) of Bos taurus (Bovine).